A 532-amino-acid polypeptide reads, in one-letter code: Variant surface glycoprotein ILTAT 1.23 (532 aa).

The signal sequence occupies residues 1 to 23 (MFKNINAAVLLLILSTRNDYANA). Asn-66 carries an N-linked (GlcNAc...) asparagine glycan. Disordered stretches follow at residues 79-107 (APKK…RNHA) and 408-504 (MQAG…DQDK). An N-linked (GlcNAc...) asparagine glycan is attached at Asn-419. Basic and acidic residues predominate over residues 427–445 (CKWEEKDGKDGKCVADDSK). The span at 450–470 (GNAPAGAGDGTAGTTTTPNCA) shows a compositional bias: low complexity. 2 stretches are compositionally biased toward basic and acidic residues: residues 472 to 484 (HTDK…ENKG) and 494 to 504 (KGKEGESDQDK). Asn-509 carries an N-linked (GlcNAc...) asparagine glycan. Asn-509 is lipidated: GPI-anchor amidated asparagine. Residues 510 to 532 (GSFLAKKKFALSVVSAAFTALLF) constitute a propeptide, removed in mature form.

It localises to the cell membrane. In terms of biological role, VSG forms a coat on the surface of the parasite. The trypanosome evades the immune response of the host by expressing a series of antigenically distinct VSGs from an estimated 1000 VSG genes. This chain is Variant surface glycoprotein ILTAT 1.23, found in Trypanosoma brucei brucei.